A 64-amino-acid chain; its full sequence is Large ribosomal subunit protein uL30 (64 aa).

It belongs to the universal ribosomal protein uL30 family. Part of the 50S ribosomal subunit.

This is Large ribosomal subunit protein uL30 from Bdellovibrio bacteriovorus (strain ATCC 15356 / DSM 50701 / NCIMB 9529 / HD100).